Consider the following 414-residue polypeptide: Serine hydroxymethyltransferase (414 aa).

(6S)-5,6,7,8-tetrahydrofolate contacts are provided by residues L117 and 121-123 (GHL). The residue at position 226 (K226) is an N6-(pyridoxal phosphate)lysine.

It belongs to the SHMT family. Homodimer. Pyridoxal 5'-phosphate serves as cofactor.

It localises to the cytoplasm. It catalyses the reaction (6R)-5,10-methylene-5,6,7,8-tetrahydrofolate + glycine + H2O = (6S)-5,6,7,8-tetrahydrofolate + L-serine. It functions in the pathway one-carbon metabolism; tetrahydrofolate interconversion. It participates in amino-acid biosynthesis; glycine biosynthesis; glycine from L-serine: step 1/1. Catalyzes the reversible interconversion of serine and glycine with tetrahydrofolate (THF) serving as the one-carbon carrier. This reaction serves as the major source of one-carbon groups required for the biosynthesis of purines, thymidylate, methionine, and other important biomolecules. Also exhibits THF-independent aldolase activity toward beta-hydroxyamino acids, producing glycine and aldehydes, via a retro-aldol mechanism. The polypeptide is Serine hydroxymethyltransferase (Dictyoglomus thermophilum (strain ATCC 35947 / DSM 3960 / H-6-12)).